The sequence spans 321 residues: tRNA U34 carboxymethyltransferase (321 aa).

Carboxy-S-adenosyl-L-methionine-binding positions include Lys90, Trp104, Lys109, Gly129, 151-153, 180-181, Met195, Tyr199, and Arg314; these read DPT and IE.

It belongs to the class I-like SAM-binding methyltransferase superfamily. CmoB family. In terms of assembly, homotetramer.

The enzyme catalyses carboxy-S-adenosyl-L-methionine + 5-hydroxyuridine(34) in tRNA = 5-carboxymethoxyuridine(34) in tRNA + S-adenosyl-L-homocysteine + H(+). Catalyzes carboxymethyl transfer from carboxy-S-adenosyl-L-methionine (Cx-SAM) to 5-hydroxyuridine (ho5U) to form 5-carboxymethoxyuridine (cmo5U) at position 34 in tRNAs. This chain is tRNA U34 carboxymethyltransferase, found in Haemophilus influenzae (strain ATCC 51907 / DSM 11121 / KW20 / Rd).